The chain runs to 640 residues: Paramyosin, short form (640 aa).

Nonhelical region stretches follow at residues 1-122 (MALA…PDTV) and 420-640 (KLEQ…TITE). Positions 123-619 (VERSRQRRRR…IIRAKHRTFV (497 aa)) form a coiled coil.

It belongs to the paramyosin family. In terms of processing, phosphorylated. Found in all adult muscle tissues except in indirect flight muscles and a set of temporary abdominal muscles. Not detected in larval muscle.

It is found in the cytoplasm. It localises to the myofibril. In terms of biological role, paramyosin is a major structural component of many thick filaments isolated from invertebrate muscles. This Drosophila melanogaster (Fruit fly) protein is Paramyosin, short form (Prm).